A 90-amino-acid chain; its full sequence is Small ribosomal subunit protein uS15c (90 aa).

The span at 1–11 (MVKNSFSSVIS) shows a compositional bias: polar residues. Positions 1–20 (MVKNSFSSVISQEEKKENGG) are disordered.

Belongs to the universal ribosomal protein uS15 family. In terms of assembly, part of the 30S ribosomal subunit.

The protein localises to the plastid. Its subcellular location is the chloroplast. The polypeptide is Small ribosomal subunit protein uS15c (rps15) (Cucumis sativus (Cucumber)).